The primary structure comprises 199 residues: RNA-free ribonuclease P (199 aa).

The protein belongs to the HARP family.

It catalyses the reaction Endonucleolytic cleavage of RNA, removing 5'-extranucleotides from tRNA precursor.. RNA-free RNase P that catalyzes the removal of the 5'-leader sequence from pre-tRNA to produce the mature 5'-terminus. This chain is RNA-free ribonuclease P, found in Pyrococcus furiosus (strain ATCC 43587 / DSM 3638 / JCM 8422 / Vc1).